The primary structure comprises 997 residues: FHIP family protein CPIJ015043 (997 aa).

Disordered stretches follow at residues 558-579 and 759-922; these read DHRS…QQLQ and NVVL…GGAA. The span at 569 to 579 shows a compositional bias: low complexity; the sequence is QQHLHQQQQLQ. Residues 763-780 are compositionally biased toward gly residues; the sequence is GGSGPGGPRLSNGGGGTG. Low complexity-rich tracts occupy residues 781-792 and 830-889; these read SSITSSLSQTTP and GSNS…MVGS. Positions 911 to 922 are enriched in gly residues; that stretch reads IGSGTVGGGGAA.

It belongs to the FHIP family.

This is FHIP family protein CPIJ015043 from Culex quinquefasciatus (Southern house mosquito).